The chain runs to 159 residues: Ribosome maturation factor RimP (159 aa).

It belongs to the RimP family.

The protein localises to the cytoplasm. Functionally, required for maturation of 30S ribosomal subunits. This is Ribosome maturation factor RimP from Geobacter metallireducens (strain ATCC 53774 / DSM 7210 / GS-15).